A 526-amino-acid chain; its full sequence is MLAKGLSLRSVLVKGCQPFLSPTWQGPVLSTGKGAGTSTSSPRSFNEIPSPGDNGWLNLYHFWRESGTQKIHYHQMQSFQKYGPIYREKLGTLESVYIVDPKDASILFSCEGPNPERFLVPPWVAYHQYYQRPIGVLFKSSDAWKKDRIVLNQEVMAPGAIKNFVPLLEGVAQDFIKVLHRRIKQQNSGNFSGVISDDLFRFSFESISSVIFGERMGMLEEIVDPEAQRFINAVYQMFHTSVPMLNLPPDFFRLLRTKTWKDHAAAWDVIFNKADEYTQNFYWDLRQKRDFSQYPGVLYSLLGGNKLPFKNIQANITEMLAGGVDTTSMTLQWNLYEMAHNLKVQEMLRAEVLAARRQAQGDMAKMVQLVPLLKASIKETLRLHPISVTLQRYTVNDLVLRNYKIPAKTLVQVASFAMGRDPGFFPNPNKFDPTRWLEKSQNTTHFRYLGFGWGVRQCLGRRIAELEMTILLINLLENFRIEVQNLRDVGTKFSLILMPENPILFNFQPLKQDLGPAVTRKDNTVN.

The transit peptide at 1-36 directs the protein to the mitochondrion; sequence MLAKGLSLRSVLVKGCQPFLSPTWQGPVLSTGKGAG. Over residues 30–41 the composition is skewed to low complexity; sequence STGKGAGTSTSS. Residues 30-49 form a disordered region; it reads STGKGAGTSTSSPRSFNEIP. Cys-458 lines the heme pocket.

It belongs to the cytochrome P450 family. Interacts with FDX1/adrenodoxin. Heme serves as cofactor.

The protein localises to the mitochondrion inner membrane. The enzyme catalyses 6 reduced [adrenodoxin] + cholesterol + 3 O2 + 6 H(+) = 4-methylpentanal + pregnenolone + 6 oxidized [adrenodoxin] + 4 H2O. It catalyses the reaction 2 reduced [adrenodoxin] + cholesterol + O2 + 2 H(+) = (22R)-hydroxycholesterol + 2 oxidized [adrenodoxin] + H2O. It carries out the reaction (22R)-hydroxycholesterol + 2 reduced [adrenodoxin] + O2 + 2 H(+) = (20R,22R)-20,22-dihydroxycholesterol + 2 oxidized [adrenodoxin] + H2O. The catalysed reaction is (20R,22R)-20,22-dihydroxycholesterol + 2 reduced [adrenodoxin] + O2 + 2 H(+) = 4-methylpentanal + pregnenolone + 2 oxidized [adrenodoxin] + 2 H2O. It participates in lipid metabolism; C21-steroid hormone metabolism. It functions in the pathway steroid metabolism; cholesterol metabolism. A cytochrome P450 monooxygenase that catalyzes the side-chain hydroxylation and cleavage of cholesterol to pregnenolone, the precursor of most steroid hormones. Catalyzes three sequential oxidation reactions of cholesterol, namely the hydroxylation at C22 followed with the hydroxylation at C20 to yield 20R,22R-hydroxycholesterol that is further cleaved between C20 and C22 to yield the C21-steroid pregnenolone and 4-methylpentanal. Mechanistically, uses molecular oxygen inserting one oxygen atom into a substrate and reducing the second into a water molecule. Two electrons are provided by NADPH via a two-protein mitochondrial transfer system comprising flavoprotein FDXR (adrenodoxin/ferredoxin reductase) and nonheme iron-sulfur protein FDX1 or FDX2 (adrenodoxin/ferredoxin). In Mus musculus (Mouse), this protein is Cholesterol side-chain cleavage enzyme, mitochondrial.